Consider the following 276-residue polypeptide: MRLVILDNYDLASEWAAKYICNRIIKFKPGQDRYFSLGLPTGSTPLGCYKKLIEYHKSGNLSFKYVKTFNMDEYVGLPRNHPESYHSYMWNNFFKHIDIDPNNAHILDGNAADLQAECDAFEEKIKEAGGIDLFVGGIGPDGHIAFNEPGSSLVSRTRLKTLAMDTILANAKYFDGDLSKVPTMALTVGVGTVMDAREVMILITGAHKAFALYKAMEEGVNHMWTVSAFQQHPRTIFVCDEDATLELRVKTVKYFKGLMHVHNKLVDPLYSMKEGN.

Residue Asp-72 is the Proton acceptor; for enolization step of the active site. Residues 103–131 (NAHILDGNAADLQAECDAFEEKIKEAGGI) adopt a coiled-coil conformation. Residue Asp-141 is the For ring-opening step of the active site. His-143 serves as the catalytic Proton acceptor; for ring-opening step. Residue Glu-148 is the For ring-opening step of the active site. Thr-161 bears the Phosphothreonine mark.

Belongs to the glucosamine/galactosamine-6-phosphate isomerase family. In terms of assembly, homohexamer.

It localises to the cytoplasm. It catalyses the reaction alpha-D-glucosamine 6-phosphate + H2O = beta-D-fructose 6-phosphate + NH4(+). It functions in the pathway nucleotide-sugar biosynthesis; UDP-N-acetyl-alpha-D-glucosamine biosynthesis; alpha-D-glucosamine 6-phosphate from D-fructose 6-phosphate: step 1/1. With respect to regulation, allosterically activated by N-acetylglucosamine-6-phosphate (GlcNAc6P). Its function is as follows. Catalyzes the reversible conversion of alpha-D-glucosamine 6-phosphate (GlcN-6P) into beta-D-fructose 6-phosphate (Fru-6P) and ammonium ion, a regulatory reaction step in de novo uridine diphosphate-N-acetyl-alpha-D-glucosamine (UDP-GlcNAc) biosynthesis via hexosamine pathway. Deamination is coupled to aldo-keto isomerization mediating the metabolic flux from UDP-GlcNAc toward Fru-6P. At high ammonium level can drive amination and isomerization of Fru-6P toward hexosamines and UDP-GlcNAc synthesis. Has a role in fine tuning the metabolic fluctuations of cytosolic UDP-GlcNAc and their effects on hyaluronan synthesis that occur during tissue remodeling. In Mus musculus (Mouse), this protein is Glucosamine-6-phosphate deaminase 2.